The chain runs to 160 residues: Nucleotide-binding protein VF_1240 (160 aa).

The protein belongs to the YajQ family.

In terms of biological role, nucleotide-binding protein. The sequence is that of Nucleotide-binding protein VF_1240 from Aliivibrio fischeri (strain ATCC 700601 / ES114) (Vibrio fischeri).